The chain runs to 109 residues: Putative double-stranded DNA mimic protein YciU (109 aa).

This sequence belongs to the putative dsDNA mimic protein family.

Its function is as follows. May act as a double-stranded DNA (dsDNA) mimic. Probably regulates the activity of a dsDNA-binding protein. This chain is Putative double-stranded DNA mimic protein YciU, found in Salmonella arizonae (strain ATCC BAA-731 / CDC346-86 / RSK2980).